A 204-amino-acid polypeptide reads, in one-letter code: Glycerol-3-phosphate acyltransferase (204 aa).

Transmembrane regions (helical) follow at residues 8 to 28 (ILIF…CYIF), 53 to 73 (VPAA…VVIA), 81 to 101 (FITA…IFFG), 116 to 136 (FGFS…VAII), and 155 to 175 (VIFT…IIIL).

The protein belongs to the PlsY family. Probably interacts with PlsX.

It is found in the cell inner membrane. The catalysed reaction is an acyl phosphate + sn-glycerol 3-phosphate = a 1-acyl-sn-glycero-3-phosphate + phosphate. Its pathway is lipid metabolism; phospholipid metabolism. In terms of biological role, catalyzes the transfer of an acyl group from acyl-phosphate (acyl-PO(4)) to glycerol-3-phosphate (G3P) to form lysophosphatidic acid (LPA). This enzyme utilizes acyl-phosphate as fatty acyl donor, but not acyl-CoA or acyl-ACP. This chain is Glycerol-3-phosphate acyltransferase, found in Francisella tularensis subsp. tularensis (strain FSC 198).